Here is a 239-residue protein sequence, read N- to C-terminus: Ribosomal RNA small subunit methyltransferase G (239 aa).

S-adenosyl-L-methionine is bound by residues Gly-78, Phe-83, 129 to 130, and Arg-148; that span reads AE.

The protein belongs to the methyltransferase superfamily. RNA methyltransferase RsmG family.

The protein localises to the cytoplasm. Specifically methylates the N7 position of a guanine in 16S rRNA. The sequence is that of Ribosomal RNA small subunit methyltransferase G from Clostridium botulinum (strain Kyoto / Type A2).